The sequence spans 660 residues: Bifunctional polymyxin resistance protein ArnA (660 aa).

The tract at residues 1–304 is formyltransferase ArnAFT; it reads MKTVVFAYHD…TLGLVQGSRL (304 aa). 86–88 contacts (6R)-10-formyltetrahydrofolate; it reads HLI. Residue His104 is the Proton donor; for formyltransferase activity of the active site. (6R)-10-formyltetrahydrofolate contacts are provided by residues Arg114 and 136–140; that span reads VKRAD. The interval 314 to 660 is dehydrogenase ArnADH; it reads RRTRVLILGV…RTVDLTDKPS (347 aa). Residues Asp347 and 368–369 contribute to the NAD(+) site; that span reads DI. UDP-alpha-D-glucuronate-binding positions include Ala393, Tyr398, and 432-433; that span reads TS. Residue Glu434 is the Proton acceptor; for decarboxylase activity of the active site. UDP-alpha-D-glucuronate contacts are provided by residues Arg460, Asn492, 526–535, and Tyr613; that span reads KLIDGGKQKR. Arg619 serves as the catalytic Proton donor; for decarboxylase activity.

This sequence in the N-terminal section; belongs to the Fmt family. UDP-L-Ara4N formyltransferase subfamily. It in the C-terminal section; belongs to the NAD(P)-dependent epimerase/dehydratase family. UDP-glucuronic acid decarboxylase subfamily. Homohexamer, formed by a dimer of trimers.

It carries out the reaction UDP-alpha-D-glucuronate + NAD(+) = UDP-beta-L-threo-pentopyranos-4-ulose + CO2 + NADH. The catalysed reaction is UDP-4-amino-4-deoxy-beta-L-arabinose + (6R)-10-formyltetrahydrofolate = UDP-4-deoxy-4-formamido-beta-L-arabinose + (6S)-5,6,7,8-tetrahydrofolate + H(+). It participates in nucleotide-sugar biosynthesis; UDP-4-deoxy-4-formamido-beta-L-arabinose biosynthesis; UDP-4-deoxy-4-formamido-beta-L-arabinose from UDP-alpha-D-glucuronate: step 1/3. Its pathway is nucleotide-sugar biosynthesis; UDP-4-deoxy-4-formamido-beta-L-arabinose biosynthesis; UDP-4-deoxy-4-formamido-beta-L-arabinose from UDP-alpha-D-glucuronate: step 3/3. The protein operates within bacterial outer membrane biogenesis; lipopolysaccharide biosynthesis. Functionally, bifunctional enzyme that catalyzes the oxidative decarboxylation of UDP-glucuronic acid (UDP-GlcUA) to UDP-4-keto-arabinose (UDP-Ara4O) and the addition of a formyl group to UDP-4-amino-4-deoxy-L-arabinose (UDP-L-Ara4N) to form UDP-L-4-formamido-arabinose (UDP-L-Ara4FN). The modified arabinose is attached to lipid A and is required for resistance to polymyxin and cationic antimicrobial peptides. The protein is Bifunctional polymyxin resistance protein ArnA of Escherichia coli O9:H4 (strain HS).